The sequence spans 301 residues: Eukaryotic translation initiation factor 3 subunit F (301 aa).

Residues 32–169 form the MPN domain; that stretch reads VHVHPVALFS…IKSYISSPLG (138 aa).

This sequence belongs to the eIF-3 subunit F family. In terms of assembly, component of the eukaryotic translation initiation factor 3 (eIF-3) complex.

Its subcellular location is the cytoplasm. Component of the eukaryotic translation initiation factor 3 (eIF-3) complex, which is involved in protein synthesis of a specialized repertoire of mRNAs and, together with other initiation factors, stimulates binding of mRNA and methionyl-tRNAi to the 40S ribosome. The eIF-3 complex specifically targets and initiates translation of a subset of mRNAs involved in cell proliferation. The protein is Eukaryotic translation initiation factor 3 subunit F of Mycosarcoma maydis (Corn smut fungus).